The following is a 413-amino-acid chain: Multifunctional CCA protein (413 aa).

2 residues coordinate ATP: glycine 8 and arginine 11. Positions 8 and 11 each coordinate CTP. Residues aspartate 21 and aspartate 23 each contribute to the Mg(2+) site. ATP contacts are provided by arginine 91, arginine 137, and arginine 140. Residues arginine 91, arginine 137, and arginine 140 each contribute to the CTP site. Residues 228 to 329 (TGLHTLMTVT…VKLFDSIDAW (102 aa)) enclose the HD domain.

The protein belongs to the tRNA nucleotidyltransferase/poly(A) polymerase family. Bacterial CCA-adding enzyme type 1 subfamily. Monomer. Can also form homodimers and oligomers. The cofactor is Mg(2+). Requires Ni(2+) as cofactor.

It carries out the reaction a tRNA precursor + 2 CTP + ATP = a tRNA with a 3' CCA end + 3 diphosphate. The catalysed reaction is a tRNA with a 3' CCA end + 2 CTP + ATP = a tRNA with a 3' CCACCA end + 3 diphosphate. In terms of biological role, catalyzes the addition and repair of the essential 3'-terminal CCA sequence in tRNAs without using a nucleic acid template. Adds these three nucleotides in the order of C, C, and A to the tRNA nucleotide-73, using CTP and ATP as substrates and producing inorganic pyrophosphate. tRNA 3'-terminal CCA addition is required both for tRNA processing and repair. Also involved in tRNA surveillance by mediating tandem CCA addition to generate a CCACCA at the 3' terminus of unstable tRNAs. While stable tRNAs receive only 3'-terminal CCA, unstable tRNAs are marked with CCACCA and rapidly degraded. In Klebsiella pneumoniae subsp. pneumoniae (strain ATCC 700721 / MGH 78578), this protein is Multifunctional CCA protein.